The sequence spans 54 residues: Low temperature-induced protein lt101.2 (54 aa).

2 helical membrane passes run 2 to 22 (ASAT…GVFL) and 34 to 54 (LLLT…VLVA).

It belongs to the UPF0057 (PMP3) family.

It is found in the membrane. In Hordeum vulgare (Barley), this protein is Low temperature-induced protein lt101.2 (LT101.2).